A 485-amino-acid chain; its full sequence is Probable cobyric acid synthase (485 aa).

The GATase cobBQ-type domain occupies 250 to 435 (EIEIAVIRLP…LHGLFDNKNI (186 aa)). The Nucleophile role is filled by C328. Residue H427 is part of the active site.

It belongs to the CobB/CobQ family. CobQ subfamily.

The protein operates within cofactor biosynthesis; adenosylcobalamin biosynthesis. In terms of biological role, catalyzes amidations at positions B, D, E, and G on adenosylcobyrinic A,C-diamide. NH(2) groups are provided by glutamine, and one molecule of ATP is hydrogenolyzed for each amidation. The sequence is that of Probable cobyric acid synthase from Methanosarcina barkeri (strain Fusaro / DSM 804).